The following is a 355-amino-acid chain: MPARGKISVLIVDDSGMARAMLRSIFEDEDDFDVVAEAVNGREAIEMVRHLRPGLVTMDLEMPEMGGLEAIEEIMCSKAVPILVVSGVADAQKAFGAMSRGAVDVVAKPNVTSAREVEDFVDKARLVAKIPVITVPRTRSAPAAGPTPVPQAPPPPAAPPAGDGGIIAIAASTGGPQALAALLAAIGRPLSCPMVVAQHISDGFASGMADWLNSISAMPVRLAAEGERLTAGTVYLSPSEWNMSVTESRHIALALRPERQVYRPSCDALLTSVAQVAGRRAVGVILTGMGSDGVAGMEAISKAGGTTLGQDEGSSVIFGMNAIAIERGWVQRVLPLAELAASLLEITGASVGAAP.

One can recognise a Response regulatory domain in the interval 8-123; sequence SVLIVDDSGM…AREVEDFVDK (116 aa). Position 59 is a 4-aspartylphosphate (D59). Positions 139–161 are disordered; sequence RSAPAAGPTPVPQAPPPPAAPPA. Pro residues predominate over residues 145–159; sequence GPTPVPQAPPPPAAP. Positions 160–350 constitute a CheB-type methylesterase domain; that stretch reads PAGDGGIIAI…ASLLEITGAS (191 aa). Residues S172, H199, and D292 contribute to the active site.

Belongs to the CheB family. Phosphorylated by CheA. Phosphorylation of the N-terminal regulatory domain activates the methylesterase activity.

The protein localises to the cytoplasm. The catalysed reaction is [protein]-L-glutamate 5-O-methyl ester + H2O = L-glutamyl-[protein] + methanol + H(+). The enzyme catalyses L-glutaminyl-[protein] + H2O = L-glutamyl-[protein] + NH4(+). Functionally, involved in chemotaxis. Part of a chemotaxis signal transduction system that modulates chemotaxis in response to various stimuli. Catalyzes the demethylation of specific methylglutamate residues introduced into the chemoreceptors (methyl-accepting chemotaxis proteins or MCP) by CheR. Also mediates the irreversible deamidation of specific glutamine residues to glutamic acid. This Paramagnetospirillum magneticum (strain ATCC 700264 / AMB-1) (Magnetospirillum magneticum) protein is Protein-glutamate methylesterase/protein-glutamine glutaminase 3.